Consider the following 287-residue polypeptide: Phosphatidylserine decarboxylase proenzyme (287 aa).

Active-site charge relay system; for autoendoproteolytic cleavage activity residues include Asp-90, His-147, and Ser-253. Ser-253 functions as the Schiff-base intermediate with substrate; via pyruvic acid; for decarboxylase activity in the catalytic mechanism. At Ser-253 the chain carries Pyruvic acid (Ser); by autocatalysis.

The protein belongs to the phosphatidylserine decarboxylase family. PSD-B subfamily. Prokaryotic type I sub-subfamily. In terms of assembly, heterodimer of a large membrane-associated beta subunit and a small pyruvoyl-containing alpha subunit. The cofactor is pyruvate. Is synthesized initially as an inactive proenzyme. Formation of the active enzyme involves a self-maturation process in which the active site pyruvoyl group is generated from an internal serine residue via an autocatalytic post-translational modification. Two non-identical subunits are generated from the proenzyme in this reaction, and the pyruvate is formed at the N-terminus of the alpha chain, which is derived from the carboxyl end of the proenzyme. The autoendoproteolytic cleavage occurs by a canonical serine protease mechanism, in which the side chain hydroxyl group of the serine supplies its oxygen atom to form the C-terminus of the beta chain, while the remainder of the serine residue undergoes an oxidative deamination to produce ammonia and the pyruvoyl prosthetic group on the alpha chain. During this reaction, the Ser that is part of the protease active site of the proenzyme becomes the pyruvoyl prosthetic group, which constitutes an essential element of the active site of the mature decarboxylase.

It is found in the cell membrane. It carries out the reaction a 1,2-diacyl-sn-glycero-3-phospho-L-serine + H(+) = a 1,2-diacyl-sn-glycero-3-phosphoethanolamine + CO2. Its pathway is phospholipid metabolism; phosphatidylethanolamine biosynthesis; phosphatidylethanolamine from CDP-diacylglycerol: step 2/2. Its function is as follows. Catalyzes the formation of phosphatidylethanolamine (PtdEtn) from phosphatidylserine (PtdSer). This Aliivibrio fischeri (strain MJ11) (Vibrio fischeri) protein is Phosphatidylserine decarboxylase proenzyme.